Reading from the N-terminus, the 266-residue chain is Dihydropteroate synthase (266 aa).

Residues 12–260 enclose the Pterin-binding domain; it reads AAIMGILNVT…DVKANQDIVA (249 aa). Asparagine 19 provides a ligand contact to Mg(2+). (7,8-dihydropterin-6-yl)methyl diphosphate contacts are provided by residues threonine 59, aspartate 93, asparagine 112, aspartate 176, lysine 212, and 248 to 250; that span reads RVH.

The protein belongs to the DHPS family. In terms of assembly, homodimer or homotrimer. Mg(2+) is required as a cofactor.

The catalysed reaction is (7,8-dihydropterin-6-yl)methyl diphosphate + 4-aminobenzoate = 7,8-dihydropteroate + diphosphate. It functions in the pathway cofactor biosynthesis; tetrahydrofolate biosynthesis; 7,8-dihydrofolate from 2-amino-4-hydroxy-6-hydroxymethyl-7,8-dihydropteridine diphosphate and 4-aminobenzoate: step 1/2. Functionally, catalyzes the condensation of para-aminobenzoate (pABA) with 6-hydroxymethyl-7,8-dihydropterin diphosphate (DHPt-PP) to form 7,8-dihydropteroate (H2Pte), the immediate precursor of folate derivatives. The sequence is that of Dihydropteroate synthase (folP) from Streptococcus pyogenes serotype M1.